The primary structure comprises 318 residues: Methionyl-tRNA formyltransferase (318 aa).

112–115 contacts (6S)-5,6,7,8-tetrahydrofolate; it reads SILP.

The protein belongs to the Fmt family.

It catalyses the reaction L-methionyl-tRNA(fMet) + (6R)-10-formyltetrahydrofolate = N-formyl-L-methionyl-tRNA(fMet) + (6S)-5,6,7,8-tetrahydrofolate + H(+). In terms of biological role, attaches a formyl group to the free amino group of methionyl-tRNA(fMet). The formyl group appears to play a dual role in the initiator identity of N-formylmethionyl-tRNA by promoting its recognition by IF2 and preventing the misappropriation of this tRNA by the elongation apparatus. The sequence is that of Methionyl-tRNA formyltransferase from Shewanella sp. (strain ANA-3).